Consider the following 93-residue polypeptide: MALVRSLFSAKKILGGSLVKTSKAPPKGFLAVYVGESQKKQRHFVPVSYLNQPLFQDLLSKCEEEFGFDHPMGGLTIPCPVDTFISITSQLQG.

The protein belongs to the ARG7 family. As to quaternary structure, interacts with PP2C-D1. Higher expression in thermo-responsive cultivars (e.g. cv. Alst-1, cv. Ang-0 and cv. Com-0) than in low thermo-responsive cultivars (e.g. cv. Dja-1, cv. El-0 and cv. Kon).

The protein resides in the cell membrane. Provide a mechanistic link between auxin and plasma membrane H(+)-ATPases (PM H(+)-ATPases, e.g. AHA1 and AHA2), and triggers PM H(+)-ATPases activity by promoting phosphorylation of their C-terminal autoinhibitory domain as a result of PP2C-D subfamily of type 2C phosphatases inhibition, thus leading to the acidification of the apoplast and the facilitation of solutes and water uptake to drive cell expansion. Functions as a positive effectors of cell expansion through modulation of auxin transport. Involved in thermo-responsiveness of plant architecture. Enhances plasma membrane H(+)-ATPase. Probably involved in light intensity mediated root development. The polypeptide is Auxin-responsive protein SAUR26 (Arabidopsis thaliana (Mouse-ear cress)).